The sequence spans 169 residues: Thaumatin-like pathogenesis-related protein 2 (169 aa).

Residues 1–21 (MATSSAVLFFLLAVFAAGASA) form the signal peptide.

This sequence belongs to the thaumatin family.

Functionally, associated with resistance against stem rust fungi. This chain is Thaumatin-like pathogenesis-related protein 2 (RASTL-2), found in Avena sativa (Oat).